The primary structure comprises 324 residues: MKPSVILYKALPDDLLQRLQEHFTVHQVANLSPQTVEQNAAIFAEAEGLLGSNENVDAALLEKMPKLRATSTISVGYDNFDVDALTARKILLMHTPTVLTETVADTLMALVLSTARRVVEVAERVKAGEWTASIGPDWYGTDVHHKTLGIVGMGRIGMALAQRAHFGFNMPILYNARRHHKEAEERFNARYCNLDTLLQESDFVCLILPLTDETHHLFGAEQFAKMKSSAIFINAGRGPVVDENALIAALQKGEIHAAGLDVFEQEPLSVDSPLLSMANVVAVPHIGSATHETRYGMAACAVDNLIDALQGKVEKNCVNPHVAD.

Residues R237 and E266 contribute to the active site. The active-site Proton donor is the H285.

It belongs to the D-isomer specific 2-hydroxyacid dehydrogenase family. GhrB subfamily. In terms of assembly, homodimer.

It localises to the cytoplasm. It carries out the reaction glycolate + NADP(+) = glyoxylate + NADPH + H(+). It catalyses the reaction (R)-glycerate + NAD(+) = 3-hydroxypyruvate + NADH + H(+). The catalysed reaction is (R)-glycerate + NADP(+) = 3-hydroxypyruvate + NADPH + H(+). Its function is as follows. Catalyzes the NADPH-dependent reduction of glyoxylate and hydroxypyruvate into glycolate and glycerate, respectively. This Escherichia coli O6:H1 (strain CFT073 / ATCC 700928 / UPEC) protein is Glyoxylate/hydroxypyruvate reductase B.